Reading from the N-terminus, the 127-residue chain is Small ribosomal subunit protein uS13 (127 aa).

A disordered region spans residues Arg93–Lys127.

This sequence belongs to the universal ribosomal protein uS13 family. Part of the 30S ribosomal subunit. Forms a loose heterodimer with protein S19. Forms two bridges to the 50S subunit in the 70S ribosome.

Located at the top of the head of the 30S subunit, it contacts several helices of the 16S rRNA. In the 70S ribosome it contacts the 23S rRNA (bridge B1a) and protein L5 of the 50S subunit (bridge B1b), connecting the 2 subunits; these bridges are implicated in subunit movement. Contacts the tRNAs in the A and P-sites. The polypeptide is Small ribosomal subunit protein uS13 (Koribacter versatilis (strain Ellin345)).